Consider the following 475-residue polypeptide: Aspartyl/glutamyl-tRNA(Asn/Gln) amidotransferase subunit B (475 aa).

Belongs to the GatB/GatE family. GatB subfamily. In terms of assembly, heterotrimer of A, B and C subunits.

The enzyme catalyses L-glutamyl-tRNA(Gln) + L-glutamine + ATP + H2O = L-glutaminyl-tRNA(Gln) + L-glutamate + ADP + phosphate + H(+). The catalysed reaction is L-aspartyl-tRNA(Asn) + L-glutamine + ATP + H2O = L-asparaginyl-tRNA(Asn) + L-glutamate + ADP + phosphate + 2 H(+). Its function is as follows. Allows the formation of correctly charged Asn-tRNA(Asn) or Gln-tRNA(Gln) through the transamidation of misacylated Asp-tRNA(Asn) or Glu-tRNA(Gln) in organisms which lack either or both of asparaginyl-tRNA or glutaminyl-tRNA synthetases. The reaction takes place in the presence of glutamine and ATP through an activated phospho-Asp-tRNA(Asn) or phospho-Glu-tRNA(Gln). This Bacillus thuringiensis subsp. konkukian (strain 97-27) protein is Aspartyl/glutamyl-tRNA(Asn/Gln) amidotransferase subunit B.